The following is a 139-amino-acid chain: Endoribonuclease YbeY (139 aa).

Positions 107, 111, and 117 each coordinate Zn(2+).

This sequence belongs to the endoribonuclease YbeY family. The cofactor is Zn(2+).

Its subcellular location is the cytoplasm. Functionally, single strand-specific metallo-endoribonuclease involved in late-stage 70S ribosome quality control and in maturation of the 3' terminus of the 16S rRNA. The polypeptide is Endoribonuclease YbeY (Bacteroides fragilis (strain ATCC 25285 / DSM 2151 / CCUG 4856 / JCM 11019 / LMG 10263 / NCTC 9343 / Onslow / VPI 2553 / EN-2)).